The primary structure comprises 241 residues: MKLIFLSGVKRSGKDTTADFIMSNYSAVKYQLAGPIKDALAYAWGVFAANTDYPCLTRKEFEGIDYDRETNLNLTKLEVITIMEQAFCYLNGKSPIKGVFVFDDEGKESVNFVAFNKITDVINNIEDQWSVRRLMQALGTDLIVNNFDRMYWVKLFALDYLDKFNSGYDYYIVPDTRQDHEMDAARAMGATVIHVVRPGQKSNDTHITEAGLPIRDGDLVITNDGSLEELFSKIKNTLKVL.

A dGMP-binding site is contributed by Lys10. Positions 11, 13, 15, and 16 each coordinate ATP. Residues Ile36 and Lys37 each coordinate dGMP. Residue Tyr42 coordinates Mg(2+). Arg68 provides a ligand contact to dGMP. Mg(2+) contacts are provided by Gln85 and Glu108. Arg132, Gly139, Thr140, Val144, Trp152, Asp175, Arg177, Gln178, Glu181, and Thr208 together coordinate dGMP.

It belongs to the dNMP kinase family. Homodimer. Requires Mg(2+) as cofactor.

It catalyses the reaction dTMP + ATP = dTDP + ADP. The enzyme catalyses dGMP + ATP = dGDP + ADP. It carries out the reaction 5-hydroxymethyl-dCMP + ATP = 5-hydroxymethyl-dCDP + ADP. Its activity is regulated as follows. Inhibited by pyridoxal 5'-phosphate and diethylpyrocarbonate. Its function is as follows. Allows the synthesis of deoxyribonucleoside triphosphates necessary for the rapid viral DNA replication. Phosphorylates dGMP, dTMP and 5-hydroxymethyl-dCMP (hmdCMP) while excluding dCMP and dAMP. The phosphorylation of 5-hydroxymethyl-dCMP represents the first step in the replacement of cytosine by hydroxymethylcytosine in new viral DNA genomes. This is Deoxynucleotide monophosphate kinase (1) from Enterobacteria phage T4 (Bacteriophage T4).